Here is a 197-residue protein sequence, read N- to C-terminus: Inner membrane-spanning protein YciB (197 aa).

5 helical membrane passes run 22–42 (IYSA…YHWF), 48–68 (PSMM…TLIF), 76–96 (WKPS…HLIG), 121–141 (AAWV…AYTF), and 144–164 (EIWV…FLIG).

It belongs to the YciB family.

The protein localises to the cell inner membrane. Its function is as follows. Plays a role in cell envelope biogenesis, maintenance of cell envelope integrity and membrane homeostasis. The chain is Inner membrane-spanning protein YciB from Magnetococcus marinus (strain ATCC BAA-1437 / JCM 17883 / MC-1).